A 284-amino-acid polypeptide reads, in one-letter code: MEMO1 family protein MMP1387 (284 aa).

It belongs to the MEMO1 family.

This chain is MEMO1 family protein MMP1387, found in Methanococcus maripaludis (strain DSM 14266 / JCM 13030 / NBRC 101832 / S2 / LL).